The chain runs to 194 residues: Holliday junction branch migration complex subunit RuvA (194 aa).

The segment at Met-1–Ala-64 is domain I. Residues Thr-65–Ala-143 form a domain II region. The tract at residues Ala-144 to Ala-147 is flexible linker. The segment at Ala-147–Lys-194 is domain III.

Belongs to the RuvA family. As to quaternary structure, homotetramer. Forms an RuvA(8)-RuvB(12)-Holliday junction (HJ) complex. HJ DNA is sandwiched between 2 RuvA tetramers; dsDNA enters through RuvA and exits via RuvB. An RuvB hexamer assembles on each DNA strand where it exits the tetramer. Each RuvB hexamer is contacted by two RuvA subunits (via domain III) on 2 adjacent RuvB subunits; this complex drives branch migration. In the full resolvosome a probable DNA-RuvA(4)-RuvB(12)-RuvC(2) complex forms which resolves the HJ.

Its subcellular location is the cytoplasm. Functionally, the RuvA-RuvB-RuvC complex processes Holliday junction (HJ) DNA during genetic recombination and DNA repair, while the RuvA-RuvB complex plays an important role in the rescue of blocked DNA replication forks via replication fork reversal (RFR). RuvA specifically binds to HJ cruciform DNA, conferring on it an open structure. The RuvB hexamer acts as an ATP-dependent pump, pulling dsDNA into and through the RuvAB complex. HJ branch migration allows RuvC to scan DNA until it finds its consensus sequence, where it cleaves and resolves the cruciform DNA. The protein is Holliday junction branch migration complex subunit RuvA of Neisseria meningitidis serogroup B (strain ATCC BAA-335 / MC58).